Here is a 180-residue protein sequence, read N- to C-terminus: Acireductone dioxygenase (180 aa).

4 residues coordinate Fe(2+): H97, H99, E103, and H141. Residues H97, H99, E103, and H141 each contribute to the Ni(2+) site.

This sequence belongs to the acireductone dioxygenase (ARD) family. As to quaternary structure, monomer. Fe(2+) is required as a cofactor. Ni(2+) serves as cofactor.

It carries out the reaction 1,2-dihydroxy-5-(methylsulfanyl)pent-1-en-3-one + O2 = 3-(methylsulfanyl)propanoate + CO + formate + 2 H(+). The catalysed reaction is 1,2-dihydroxy-5-(methylsulfanyl)pent-1-en-3-one + O2 = 4-methylsulfanyl-2-oxobutanoate + formate + 2 H(+). The protein operates within amino-acid biosynthesis; L-methionine biosynthesis via salvage pathway; L-methionine from S-methyl-5-thio-alpha-D-ribose 1-phosphate: step 5/6. Functionally, catalyzes 2 different reactions between oxygen and the acireductone 1,2-dihydroxy-3-keto-5-methylthiopentene (DHK-MTPene) depending upon the metal bound in the active site. Fe-containing acireductone dioxygenase (Fe-ARD) produces formate and 2-keto-4-methylthiobutyrate (KMTB), the alpha-ketoacid precursor of methionine in the methionine recycle pathway. Ni-containing acireductone dioxygenase (Ni-ARD) produces methylthiopropionate, carbon monoxide and formate, and does not lie on the methionine recycle pathway. This is Acireductone dioxygenase from Enterobacter sp. (strain 638).